A 310-amino-acid chain; its full sequence is UDP-N-acetylenolpyruvoylglucosamine reductase (310 aa).

In terms of domain architecture, FAD-binding PCMH-type spans 27–192; sequence KIGGKARYIV…LKATFRLQYA (166 aa). Arg-171 is an active-site residue. The active-site Proton donor is Ser-223. Glu-293 is an active-site residue.

Belongs to the MurB family. The cofactor is FAD.

The protein resides in the cytoplasm. It carries out the reaction UDP-N-acetyl-alpha-D-muramate + NADP(+) = UDP-N-acetyl-3-O-(1-carboxyvinyl)-alpha-D-glucosamine + NADPH + H(+). It functions in the pathway cell wall biogenesis; peptidoglycan biosynthesis. Its function is as follows. Cell wall formation. The protein is UDP-N-acetylenolpyruvoylglucosamine reductase of Caldicellulosiruptor saccharolyticus (strain ATCC 43494 / DSM 8903 / Tp8T 6331).